Reading from the N-terminus, the 223-residue chain is Small ribosomal subunit protein uS5 (223 aa).

Residues 1–66 are disordered; it reads MPPQQQRGRG…AERAQAETEF (66 aa). Positions 13–22 are enriched in gly residues; the sequence is RGPGGPGGPG. Residues 53 to 66 are compositionally biased toward basic and acidic residues; the sequence is GGDKAERAQAETEF. Residues 66–129 form the S5 DRBM domain; that stretch reads FQERVVQIRR…SDARKALIRV (64 aa).

The protein belongs to the universal ribosomal protein uS5 family. In terms of assembly, part of the 30S ribosomal subunit. Contacts proteins S4 and S8.

Its function is as follows. With S4 and S12 plays an important role in translational accuracy. Located at the back of the 30S subunit body where it stabilizes the conformation of the head with respect to the body. The chain is Small ribosomal subunit protein uS5 from Gloeobacter violaceus (strain ATCC 29082 / PCC 7421).